A 416-amino-acid polypeptide reads, in one-letter code: 1-deoxy-D-xylulose 5-phosphate reductoisomerase (416 aa).

Residues T10, G11, S12, I13, G36, R37, N38, and N130 each coordinate NADPH. K131 is a binding site for 1-deoxy-D-xylulose 5-phosphate. An NADPH-binding site is contributed by E132. D156 provides a ligand contact to Mn(2+). S157, E158, S194, and H217 together coordinate 1-deoxy-D-xylulose 5-phosphate. Residue E158 coordinates Mn(2+). G223 provides a ligand contact to NADPH. 1-deoxy-D-xylulose 5-phosphate-binding residues include S230, N235, K236, and E239. E239 is a Mn(2+) binding site.

Belongs to the DXR family. It depends on Mg(2+) as a cofactor. Mn(2+) is required as a cofactor.

The catalysed reaction is 2-C-methyl-D-erythritol 4-phosphate + NADP(+) = 1-deoxy-D-xylulose 5-phosphate + NADPH + H(+). Its pathway is isoprenoid biosynthesis; isopentenyl diphosphate biosynthesis via DXP pathway; isopentenyl diphosphate from 1-deoxy-D-xylulose 5-phosphate: step 1/6. Functionally, catalyzes the NADPH-dependent rearrangement and reduction of 1-deoxy-D-xylulose-5-phosphate (DXP) to 2-C-methyl-D-erythritol 4-phosphate (MEP). The sequence is that of 1-deoxy-D-xylulose 5-phosphate reductoisomerase from Synechococcus sp. (strain CC9311).